A 371-amino-acid polypeptide reads, in one-letter code: DNA-directed RNA polymerase subunit alpha (371 aa).

Positions M1–N248 are alpha N-terminal domain (alpha-NTD). Residues D264–K371 form an alpha C-terminal domain (alpha-CTD) region.

Belongs to the RNA polymerase alpha chain family. In terms of assembly, homodimer. The RNAP catalytic core consists of 2 alpha, 1 beta, 1 beta' and 1 omega subunit. When a sigma factor is associated with the core the holoenzyme is formed, which can initiate transcription.

The catalysed reaction is RNA(n) + a ribonucleoside 5'-triphosphate = RNA(n+1) + diphosphate. In terms of biological role, DNA-dependent RNA polymerase catalyzes the transcription of DNA into RNA using the four ribonucleoside triphosphates as substrates. The sequence is that of DNA-directed RNA polymerase subunit alpha from Protochlamydia amoebophila (strain UWE25).